Here is a 930-residue protein sequence, read N- to C-terminus: Kinesin-like protein KIN-7J (930 aa).

In terms of domain architecture, Kinesin motor spans lysine 9–arginine 273. Glycine 95–threonine 102 contacts ATP. 2 disordered regions span residues leucine 449–aspartate 569 and methionine 655–aspartate 686. Positions serine 459 to serine 468 are enriched in low complexity. Composition is skewed to basic and acidic residues over residues glutamate 473–methionine 482 and alanine 533–asparagine 558. Residues threonine 666–threonine 681 show a composition bias toward low complexity. Residue lysine 805 forms a Glycyl lysine isopeptide (Lys-Gly) (interchain with G-Cter in ubiquitin) linkage.

It belongs to the TRAFAC class myosin-kinesin ATPase superfamily. Kinesin family. KIN-7 subfamily.

The polypeptide is Kinesin-like protein KIN-7J (Arabidopsis thaliana (Mouse-ear cress)).